The following is a 287-amino-acid chain: Protein REVEILLE 2 (287 aa).

Residues 31 to 85 (TITKQREKWTEAEHEKFVEALKLYGRAWRRIEEHVGTKTAVQIRSHAQKFFTKVA) form the HTH myb-type domain. Positions 58-81 (WRRIEEHVGTKTAVQIRSHAQKFF) form a DNA-binding region, H-T-H motif. The interval 134–177 (QDEDNRSPTSVLSAHGSDGLGSIGSNSPNSSSAELSSHTEESLS) is disordered. Residues 156–169 (IGSNSPNSSSAELS) show a composition bias toward low complexity.

It is found in the nucleus. Positive regulator for cold-responsive gene expression and cold tolerance. Part of a regulatory feedback loop that controls a subset of the circadian outputs and modulates the central oscillator. Negatively self-regulates its own expression. The sequence is that of Protein REVEILLE 2 (RVE2) from Arabidopsis thaliana (Mouse-ear cress).